Reading from the N-terminus, the 498-residue chain is Polyamine aminopropyltransferase (498 aa).

6 consecutive transmembrane segments (helical) span residues 7 to 27 (ISVL…GTIA), 35 to 55 (VTQF…GSWL), 67 to 87 (FLEI…ILYL), 97 to 117 (IPLF…IPVL), 134 to 154 (VLSL…IFFA), and 163 to 183 (GFIF…VLPL). Positions 196 to 446 (VVVLTLLILG…AGQRPIQFKK (251 aa)) are spermidine synthase. Positions 200–439 (TLLILGFSYS…GEWGFVLAGQ (240 aa)) constitute a PABS domain. S-methyl-5'-thioadenosine is bound at residue glutamine 234. Residues histidine 264 and aspartate 288 each coordinate spermidine. S-methyl-5'-thioadenosine is bound by residues aspartate 308 and 342–343 (DA). The Proton acceptor role is filled by aspartate 360.

This sequence belongs to the spermidine/spermine synthase family. As to quaternary structure, homodimer or homotetramer.

The protein resides in the cell membrane. It catalyses the reaction S-adenosyl 3-(methylsulfanyl)propylamine + putrescine = S-methyl-5'-thioadenosine + spermidine + H(+). It participates in amine and polyamine biosynthesis; spermidine biosynthesis; spermidine from putrescine: step 1/1. Its function is as follows. Catalyzes the irreversible transfer of a propylamine group from the amino donor S-adenosylmethioninamine (decarboxy-AdoMet) to putrescine (1,4-diaminobutane) to yield spermidine. This Leptospira interrogans serogroup Icterohaemorrhagiae serovar copenhageni (strain Fiocruz L1-130) protein is Polyamine aminopropyltransferase.